The primary structure comprises 85 residues: Progonadoliberin-2 (85 aa).

The first 23 residues, 1 to 23 (MCVSRLALLLGLLLCVGAQLSFA), serve as a signal peptide directing secretion. Gln-24 bears the Pyrrolidone carboxylic acid mark. A Glycine amide modification is found at Gly-33.

This sequence belongs to the GnRH family. In terms of tissue distribution, expressed in only one cell group in the mesencephalon.

The protein localises to the secreted. Its function is as follows. Stimulates the secretion of gonadotropins. This Haplochromis burtoni (Burton's mouthbrooder) protein is Progonadoliberin-2 (gnrh2).